Reading from the N-terminus, the 268-residue chain is ClpXP adapter protein SpxH (268 aa).

This sequence belongs to the SpxH family. Interacts with Spx.

The protein resides in the cytoplasm. In terms of biological role, adapter protein required for efficient degradation of Spx by ClpXP under non-stress conditions. Interaction with Spx stabilizes Spx and exposes the C-terminus of Spx for recognition and proteolysis by ClpXP. In Staphylococcus aureus (strain MRSA252), this protein is ClpXP adapter protein SpxH.